A 243-amino-acid chain; its full sequence is tRNA1(Val) (adenine(37)-N6)-methyltransferase (243 aa).

It belongs to the methyltransferase superfamily. tRNA (adenine-N(6)-)-methyltransferase family.

Its subcellular location is the cytoplasm. It carries out the reaction adenosine(37) in tRNA1(Val) + S-adenosyl-L-methionine = N(6)-methyladenosine(37) in tRNA1(Val) + S-adenosyl-L-homocysteine + H(+). In terms of biological role, specifically methylates the adenine in position 37 of tRNA(1)(Val) (anticodon cmo5UAC). This Shewanella loihica (strain ATCC BAA-1088 / PV-4) protein is tRNA1(Val) (adenine(37)-N6)-methyltransferase.